The chain runs to 140 residues: Fluoride-specific ion channel FluC 1 (140 aa).

4 consecutive transmembrane segments (helical) span residues 4–24 (LYLA…ASFI), 32–52 (FPLA…FILT), 70–90 (TGML…LHLL), and 99–119 (LLYL…GIFL). Residues glycine 74 and threonine 77 each contribute to the Na(+) site.

Belongs to the fluoride channel Fluc/FEX (TC 1.A.43) family.

Its subcellular location is the cell membrane. The catalysed reaction is fluoride(in) = fluoride(out). Na(+) is not transported, but it plays an essential structural role and its presence is essential for fluoride channel function. In terms of biological role, fluoride-specific ion channel. Important for reducing fluoride concentration in the cell, thus reducing its toxicity. The chain is Fluoride-specific ion channel FluC 1 from Moorella thermoacetica (strain ATCC 39073 / JCM 9320).